The sequence spans 152 residues: Transcriptional regulator MraZ (152 aa).

2 SpoVT-AbrB domains span residues Ala5–Glu52 and Ala81–Thr124.

This sequence belongs to the MraZ family. In terms of assembly, forms oligomers.

The protein resides in the cytoplasm. Its subcellular location is the nucleoid. In terms of biological role, negatively regulates its own expression and that of the subsequent genes in the proximal part of the division and cell wall (dcw) gene cluster. Acts by binding directly to DNA. May also regulate the expression of genes outside the dcw cluster. This chain is Transcriptional regulator MraZ, found in Yersinia pestis bv. Antiqua (strain Antiqua).